Here is a 241-residue protein sequence, read N- to C-terminus: Triosephosphate isomerase (241 aa).

Position 9–11 (9–11 (NWK)) interacts with substrate. The Electrophile role is filled by H96. Residue E165 is the Proton acceptor of the active site. Residues G171, S204, and 225-226 (GG) each bind substrate.

It belongs to the triosephosphate isomerase family. Homodimer.

The protein localises to the cytoplasm. It catalyses the reaction D-glyceraldehyde 3-phosphate = dihydroxyacetone phosphate. The protein operates within carbohydrate biosynthesis; gluconeogenesis. It participates in carbohydrate degradation; glycolysis; D-glyceraldehyde 3-phosphate from glycerone phosphate: step 1/1. In terms of biological role, involved in the gluconeogenesis. Catalyzes stereospecifically the conversion of dihydroxyacetone phosphate (DHAP) to D-glyceraldehyde-3-phosphate (G3P). This Trichormus variabilis (strain ATCC 29413 / PCC 7937) (Anabaena variabilis) protein is Triosephosphate isomerase.